The sequence spans 204 residues: Large ribosomal subunit protein uL4 (204 aa).

Residues 47–69 (KAQKTRAEVSGGGKKPWRQKGTG) are disordered.

The protein belongs to the universal ribosomal protein uL4 family. Part of the 50S ribosomal subunit.

In terms of biological role, one of the primary rRNA binding proteins, this protein initially binds near the 5'-end of the 23S rRNA. It is important during the early stages of 50S assembly. It makes multiple contacts with different domains of the 23S rRNA in the assembled 50S subunit and ribosome. Its function is as follows. Forms part of the polypeptide exit tunnel. This is Large ribosomal subunit protein uL4 from Cellvibrio japonicus (strain Ueda107) (Pseudomonas fluorescens subsp. cellulosa).